Here is a 952-residue protein sequence, read N- to C-terminus: Leucine--tRNA ligase (952 aa).

A 'HIGH' region motif is present at residues 66 to 77 (PYPSGAGLHVGH). The 'KMSKS' region signature appears at 722–726 (KMGKS). Lys-725 provides a ligand contact to ATP.

The protein belongs to the class-I aminoacyl-tRNA synthetase family.

The protein resides in the cytoplasm. It carries out the reaction tRNA(Leu) + L-leucine + ATP = L-leucyl-tRNA(Leu) + AMP + diphosphate. This is Leucine--tRNA ligase from Corynebacterium glutamicum (strain R).